The chain runs to 433 residues: Ribosomal RNA small subunit methyltransferase B (433 aa).

S-adenosyl-L-methionine contacts are provided by residues cysteine 254–lysine 260, aspartate 277, aspartate 303, and aspartate 322. Cysteine 375 (nucleophile) is an active-site residue.

This sequence belongs to the class I-like SAM-binding methyltransferase superfamily. RsmB/NOP family.

The protein localises to the cytoplasm. It catalyses the reaction cytidine(967) in 16S rRNA + S-adenosyl-L-methionine = 5-methylcytidine(967) in 16S rRNA + S-adenosyl-L-homocysteine + H(+). Functionally, specifically methylates the cytosine at position 967 (m5C967) of 16S rRNA. The protein is Ribosomal RNA small subunit methyltransferase B of Sodalis glossinidius (strain morsitans).